The sequence spans 1082 residues: RE1-silencing transcription factor (1082 aa).

The segment at 32-117 (DLHELSKAEL…SLELSAVEPQ (86 aa)) is interaction with SIN3A. Positions 43–57 (APQLIMLANVALTGE) are interaction with SIN3B. The interval 140–413 (PVAEDKCRSS…KSKHPTCPSK (274 aa)) is interaction with ZFP90. The segment at 154-176 (FRCKPCQYEAESEEQFVHHIRIH) adopts a C2H2-type 1 zinc-finger fold. A required for binding to the neuron-restrictive silencer element region spans residues 196–207 (SGSSPAEEGEFS). C2H2-type zinc fingers lie at residues 211 to 235 (IRCD…HHLR), 243 to 265 (YKCI…LRNH), 271 to 293 (YTCS…VRTH), 299 to 321 (YKCE…MRTH), 327 to 350 (FKCD…RQVH), 356 to 378 (LNCP…VELH), and 384 to 407 (FNCP…KSKH). Disordered stretches follow at residues 408 to 809 (PTCP…ELSL) and 831 to 1027 (SKLL…KAGL). Basic and acidic residues predominate over residues 440-475 (EKMENEQTKTKGDVSGKKNEKPVKAVGKDASKEKKP). Residues 477–497 (SSVSVVQVTTRTRKSAVAAET) are compositionally biased toward low complexity. The segment covering 581–597 (KGTKKTPPKTKTSKKGG) has biased composition (basic residues). The segment covering 630 to 640 (VTGSGSSQTEL) has biased composition (polar residues). 2 stretches are compositionally biased toward pro residues: residues 684–713 (YPQP…PAPP) and 729–751 (KEPP…PPPM). Basic and acidic residues-rich tracts occupy residues 798–807 (LRKDRAEKEL) and 854–864 (NSREETPKDQE). Residues 900-909 (RVSSSEQNSA) show a composition bias toward polar residues. S950 carries the post-translational modification Phosphoserine. The tract at residues 985 to 1063 (EGIHSHDGSD…HLNRHLVNVY (79 aa)) is interaction with RCOR1. The segment at 1036–1058 (FVCIFCDRSFRKEKDYSKHLNRH) adopts a C2H2-type 9 zinc-finger fold.

As to quaternary structure, isoform 1 and isoform 2 form heterodimers. Isoform 2: Forms homodimers and homooligomers; binds to the neuron-restrictive silencer element (NRSE) as monomer. Interacts with SIN3A, SIN3B and RCOR1. Interacts with CDYL. Interacts with EHMT1 and EHMT2 only in the presence of CDYL. Part of a complex containing at least CDYL, REST, WIZ, SETB1, EHMT1 and EHMT2. Interacts (via zinc-finger DNA-binding domain) with ZFP90 (via N- and C-termini); the interaction inhibits REST repressor activity. Interacts (via C2H2-type zinc finger 5) with PRICKLE1. Interacts with FBXW11 and BTRC. Interacts with USP7. O-glycosylated. In terms of processing, phosphorylated; phosphorylation is required for ubiquitination. Post-translationally, ubiquitinated; ubiquitination is mediated by BTRC and leads to proteasomal degradation in G2 phase. Ubiquitination increases during neuronal differentiation. Deubiquitinated by USP7; leading to its stabilization and promoting the maintenance of neural progenitor cells. In terms of tissue distribution, expressed in the hippocampus, including quiescent neuronal progenitor (QNP) cells, transient-amplifying progenitor (TAP) cells, neuroblasts and mature neurons (at protein level). Expressed in embryonic stem cells (at protein level). Expressed in many non-neuronal tissues including the heart and liver. Abundantly expressed in osteoblastic lineage cells. Expressed in the spleen, kidney, blood cells, cortex, neocortex and in the utricle, saccule and organ of Corti of the inner ear. Isoform 2: Expressed in the cortex, neocortex and in the utricle, saccule and organ of Corti of the inner ear.

It localises to the nucleus. The protein localises to the cytoplasm. Functionally, transcriptional repressor which binds neuron-restrictive silencer element (NRSE) and represses neuronal gene transcription in non-neuronal cells. Restricts the expression of neuronal genes by associating with two distinct corepressors, SIN3A and RCOR1, which in turn recruit histone deacetylase to the promoters of REST-regulated genes. Mediates repression by recruiting the BHC complex at RE1/NRSE sites which acts by deacetylating and demethylating specific sites on histones, thereby acting as a chromatin modifier. Transcriptional repression by REST-CDYL via the recruitment of histone methyltransferase EHMT2 may be important in transformation suppression. Represses the expression of SRRM4 in non-neural cells to prevent the activation of neural-specific splicing events and to prevent production of REST isoform 2. Repressor activity may be inhibited by forming heterodimers with isoform 2, thereby preventing binding to NRSE or binding to corepressors and leading to derepression of target genes. Also maintains repression of neuronal genes in neural stem cells, and allows transcription and differentiation into neurons by dissociation from RE1/NRSE sites of target genes. Thereby is involved in maintaining the quiescent state of adult neural stem cells and preventing premature differentiation into mature neurons. Plays a role in the developmental switch in synaptic NMDA receptor composition during postnatal development, by repressing GRIN2B expression and thereby altering NMDA receptor properties from containing primarily GRIN2B to primarily GRIN2A subunits. Acts as a regulator of osteoblast differentiation. Key repressor of gene expression in hypoxia; represses genes in hypoxia by direct binding to an RE1/NRSE site on their promoter regions. May also function in stress resistance in the brain during aging; possibly by regulating expression of genes involved in cell death and in the stress response. Repressor of gene expression in the hippocampus after ischemia by directly binding to RE1/NRSE sites and recruiting SIN3A and RCOR1 to promoters of target genes, thereby promoting changes in chromatin modifications and ischemia-induced cell death. After ischemia, might play a role in repression of miR-132 expression in hippocampal neurons, thereby leading to neuronal cell death. Binds to the 3' region of the neuron-restrictive silencer element (NRSE), with lower affinity than isoform 1. Exhibits weaker repressor activity compared to isoform 1. May negatively regulate the repressor activity of isoform 1 by binding to isoform 1, thereby preventing its binding to NRSE and leading to derepression of target genes. However, in another study, does not appear to be implicated in repressor activity of a NRSE motif-containing reporter construct nor in inhibitory activity on the isoform 1 transcriptional repressor activity. Post-transcriptional inactivation of REST by SRRM4-dependent alternative splicing into isoform 2 is required in mechanosensory hair cells in the inner ear for derepression of neuronal genes, maintenance of hair cells and hearing. The chain is RE1-silencing transcription factor (Rest) from Mus musculus (Mouse).